Reading from the N-terminus, the 249-residue chain is ATP synthase subunit a, chloroplastic (249 aa).

Transmembrane regions (helical) follow at residues glycine 38–alanine 58, valine 97–isoleucine 117, isoleucine 136–serine 156, leucine 201–leucine 221, and glycine 222–glycine 242.

This sequence belongs to the ATPase A chain family. As to quaternary structure, F-type ATPases have 2 components, CF(1) - the catalytic core - and CF(0) - the membrane proton channel. CF(1) has five subunits: alpha(3), beta(3), gamma(1), delta(1), epsilon(1). CF(0) has four main subunits: a, b, b' and c.

The protein resides in the plastid. The protein localises to the chloroplast thylakoid membrane. Key component of the proton channel; it plays a direct role in the translocation of protons across the membrane. The chain is ATP synthase subunit a, chloroplastic from Chlorokybus atmophyticus (Soil alga).